The chain runs to 179 residues: Adenine phosphoribosyltransferase (179 aa).

This sequence belongs to the purine/pyrimidine phosphoribosyltransferase family. Homodimer.

The protein resides in the cytoplasm. It carries out the reaction AMP + diphosphate = 5-phospho-alpha-D-ribose 1-diphosphate + adenine. It functions in the pathway purine metabolism; AMP biosynthesis via salvage pathway; AMP from adenine: step 1/1. Functionally, catalyzes a salvage reaction resulting in the formation of AMP, that is energically less costly than de novo synthesis. This Helicobacter pylori (strain J99 / ATCC 700824) (Campylobacter pylori J99) protein is Adenine phosphoribosyltransferase.